A 639-amino-acid polypeptide reads, in one-letter code: Chaperone protein DnaK (639 aa).

The residue at position 195 (Thr-195) is a Phosphothreonine; by autocatalysis. Residues 601 to 618 (NAAAGAAPAGEPAPGEPQ) show a composition bias toward low complexity. The segment at 601-639 (NAAAGAAPAGEPAPGEPQAEQKKDDGVIDAEYVDVDEKK) is disordered. Residues 627 to 639 (VIDAEYVDVDEKK) are compositionally biased toward acidic residues.

Belongs to the heat shock protein 70 family.

In terms of biological role, acts as a chaperone. This Acidobacterium capsulatum (strain ATCC 51196 / DSM 11244 / BCRC 80197 / JCM 7670 / NBRC 15755 / NCIMB 13165 / 161) protein is Chaperone protein DnaK.